The chain runs to 258 residues: Phosphate import ATP-binding protein PstB 2 (258 aa).

The 242-residue stretch at 12–253 folds into the ABC transporter domain; the sequence is IQVRDLNFYY…PRQKQTEDYI (242 aa). 44-51 is a binding site for ATP; that stretch reads GPSGCGKS.

It belongs to the ABC transporter superfamily. Phosphate importer (TC 3.A.1.7) family. In terms of assembly, the complex is composed of two ATP-binding proteins (PstB), two transmembrane proteins (PstC and PstA) and a solute-binding protein (PstS).

It is found in the cell inner membrane. The catalysed reaction is phosphate(out) + ATP + H2O = ADP + 2 phosphate(in) + H(+). In terms of biological role, part of the ABC transporter complex PstSACB involved in phosphate import. Responsible for energy coupling to the transport system. The chain is Phosphate import ATP-binding protein PstB 2 from Pectobacterium atrosepticum (strain SCRI 1043 / ATCC BAA-672) (Erwinia carotovora subsp. atroseptica).